Here is a 428-residue protein sequence, read N- to C-terminus: Serine--tRNA ligase (428 aa).

237 to 239 (TAE) lines the L-serine pocket. 268-270 (RSE) is a binding site for ATP. L-serine is bound at residue Glu291. 355-358 (EISS) lines the ATP pocket. L-serine is bound at residue Ser390.

Belongs to the class-II aminoacyl-tRNA synthetase family. Type-1 seryl-tRNA synthetase subfamily. As to quaternary structure, homodimer. The tRNA molecule binds across the dimer.

It localises to the cytoplasm. It catalyses the reaction tRNA(Ser) + L-serine + ATP = L-seryl-tRNA(Ser) + AMP + diphosphate + H(+). The enzyme catalyses tRNA(Sec) + L-serine + ATP = L-seryl-tRNA(Sec) + AMP + diphosphate + H(+). It functions in the pathway aminoacyl-tRNA biosynthesis; selenocysteinyl-tRNA(Sec) biosynthesis; L-seryl-tRNA(Sec) from L-serine and tRNA(Sec): step 1/1. Its function is as follows. Catalyzes the attachment of serine to tRNA(Ser). Is also able to aminoacylate tRNA(Sec) with serine, to form the misacylated tRNA L-seryl-tRNA(Sec), which will be further converted into selenocysteinyl-tRNA(Sec). The sequence is that of Serine--tRNA ligase from Hydrogenovibrio crunogenus (strain DSM 25203 / XCL-2) (Thiomicrospira crunogena).